The following is a 425-amino-acid chain: Serine--tRNA ligase (425 aa).

Position 230 to 232 (230 to 232 (TAE)) interacts with L-serine. 261–263 (RAE) serves as a coordination point for ATP. Residue E284 coordinates L-serine. 348–351 (EISS) is an ATP binding site. S384 is an L-serine binding site.

The protein belongs to the class-II aminoacyl-tRNA synthetase family. Type-1 seryl-tRNA synthetase subfamily. Homodimer. The tRNA molecule binds across the dimer.

It localises to the cytoplasm. The enzyme catalyses tRNA(Ser) + L-serine + ATP = L-seryl-tRNA(Ser) + AMP + diphosphate + H(+). It carries out the reaction tRNA(Sec) + L-serine + ATP = L-seryl-tRNA(Sec) + AMP + diphosphate + H(+). It participates in aminoacyl-tRNA biosynthesis; selenocysteinyl-tRNA(Sec) biosynthesis; L-seryl-tRNA(Sec) from L-serine and tRNA(Sec): step 1/1. Its function is as follows. Catalyzes the attachment of serine to tRNA(Ser). Is also able to aminoacylate tRNA(Sec) with serine, to form the misacylated tRNA L-seryl-tRNA(Sec), which will be further converted into selenocysteinyl-tRNA(Sec). The protein is Serine--tRNA ligase of Zymomonas mobilis subsp. mobilis (strain ATCC 31821 / ZM4 / CP4).